Here is a 325-residue protein sequence, read N- to C-terminus: E3 ubiquitin-protein ligase SIAH2 (325 aa).

Polar residues predominate over residues 1–15 (MSRPSSTGPSANKPC). Residues 1–43 (MSRPSSTGPSANKPCSKQPPPPQTPHAPSPAAPPAAATISAAG) are disordered. Position 6 is a phosphoserine (Ser6). A Phosphoserine; by DYRK2 modification is found at Ser16. Residues 17–33 (KQPPPPQTPHAPSPAAP) are compositionally biased toward pro residues. The residue at position 24 (Thr24) is a Phosphothreonine; by MAPK14. Position 29 is a phosphoserine; by DYRK2 and MAPK14 (Ser29). Residues 34–43 (PAAATISAAG) are compositionally biased toward low complexity. Ser69 carries the phosphoserine; by DYRK2 modification. Residues 81-116 (CPVCFDYVLPPILQCQAGHLVCNQCRQKLSCCPTCR) form an RING-type zinc finger. At Thr120 the chain carries Phosphothreonine; by DYRK2. The segment at 131–323 (VASAVLFPCK…LGINVTISTC (193 aa)) is SBD. The segment at 134–194 (AVLFPCKYAT…VMSHLMHAHK (61 aa)) adopts an SIAH-type zinc-finger fold. Zn(2+)-binding residues include Cys139, Cys146, His158, Cys162, Cys169, Cys176, His188, and His193.

This sequence belongs to the SINA (Seven in absentia) family. Homodimer. Interacts with UBE2E2. Interacts with VAV1, without mediating its ubiquitin-mediated degradation. Interacts with CACYBP/SIP. Probable component of some large E3 complex possibly composed of UBE2D1, SIAH2, CACYBP/SIP, SKP1, APC and TBL1X. Interacts with UBE2I. Interacts with PEG10, which may inhibit its activity. Interacts with EGLN2 and SNCAIP. Interacts with DYRK2. Interacts with PEG3. Interacts with NR1D1 and NR1D2. Interacts with DCC. Interacts with AXIN1. Phosphorylated at Ser-29 by DYRK2; this increases the ubiquitin ligase activity and promotes degradation of EGLN3. Phosphorylated at Thr-24 and Ser-29 by MAPK14, which mediates the degradation by the proteasome of EGLN3. As to expression, widely expressed at low level in embryos and adults. Expressed in a specific population of germ cells within both the mouse ovary and testis. Absent in primordial oocytes but expressed in all growing oocytes, coincident with their recruitment from the pool of quiescent cells. Its level of expression increases as the oocytes mature. Expressed in Graafian follicles and in fertilized zygotes up until the two cell stage, a time of extensive maternal transcript degradation and zygotic gene activation. Expressed in the testis from postmeiotic spermatids.

It localises to the cytoplasm. The protein resides in the nucleus. It carries out the reaction S-ubiquitinyl-[E2 ubiquitin-conjugating enzyme]-L-cysteine + [acceptor protein]-L-lysine = [E2 ubiquitin-conjugating enzyme]-L-cysteine + N(6)-ubiquitinyl-[acceptor protein]-L-lysine.. It functions in the pathway protein modification; protein ubiquitination. Functionally, E3 ubiquitin-protein ligase that mediates ubiquitination and subsequent proteasomal degradation of target proteins. E3 ubiquitin ligases accept ubiquitin from an E2 ubiquitin-conjugating enzyme in the form of a thioester and then directly transfers the ubiquitin to targeted substrates. Mediates E3 ubiquitin ligase activity either through direct binding to substrates or by functioning as the essential RING domain subunit of larger E3 complexes. Mediates ubiquitination and proteasomal degradation of DYRK2 in response to hypoxia. Promotes monoubiquitination of SNCA. Triggers the ubiquitin-mediated degradation of many substrates, including proteins involved in transcription regulation (GPS2, POU2AF1, PML, NCOR1), a cell surface receptor (DCC), an antiapoptotic protein (BAG1), and a protein involved in synaptic vesicle function in neurons (SYP). It is thereby involved in apoptosis, tumor suppression, cell cycle, transcription and signaling processes. Has some overlapping function with SIAH1. Triggers the ubiquitin-mediated degradation of TRAF2, whereas SIAH1 does not. Regulates cellular clock function via ubiquitination of the circadian transcriptional repressors NR1D1 and NR1D2 leading to their proteasomal degradation. Plays an important role in mediating the rhythmic degradation/clearance of NR1D1 and NR1D2 contributing to their circadian profile of protein abundance. Mediates ubiquitination and degradation of EGLN2 and EGLN3 in response to the unfolded protein response (UPR), leading to their degradation and subsequent stabilization of ATF4. Also part of the Wnt signaling pathway in which it mediates the Wnt-induced ubiquitin-mediated proteasomal degradation of AXIN1. This is E3 ubiquitin-protein ligase SIAH2 (Siah2) from Mus musculus (Mouse).